A 142-amino-acid polypeptide reads, in one-letter code: MRFFVPLFLVGILFPAILAKQFTKCELSQLLKDIDGYGGIALPELICTMFHTSGYDTQAIVENNESTEYGLFQISNKLWCKSSQVPQSRNICDISCDKFLDDDITDDIMCAKKILDIKGIDYWLAHKALCTEKLEQWLCEKL.

The N-terminal stretch at 1–19 (MRFFVPLFLVGILFPAILA) is a signal peptide. In terms of domain architecture, C-type lysozyme spans 20-142 (KQFTKCELSQ…KLEQWLCEKL (123 aa)). 4 cysteine pairs are disulfide-bonded: cysteine 25–cysteine 139, cysteine 47–cysteine 130, cysteine 80–cysteine 96, and cysteine 92–cysteine 110. Positions 57 and 58 each coordinate Ca(2+). N-linked (GlcNAc...) asparagine glycosylation occurs at asparagine 64. Residue glutamate 68 participates in Zn(2+) binding. An N-linked (GlcNAc...) asparagine; atypical; partial glycan is attached at asparagine 90. Positions 98, 100, 101, 102, 103, 106, and 107 each coordinate Ca(2+). Glutamate 135 lines the Zn(2+) pocket.

It belongs to the glycosyl hydrolase 22 family. Lactose synthase (LS) is a heterodimer of a catalytic component, beta1,4-galactosyltransferase (beta4Gal-T1) and a regulatory component, alpha-lactalbumin (LA). In terms of tissue distribution, mammary gland specific. Secreted in milk.

The protein localises to the secreted. Its function is as follows. Regulatory subunit of lactose synthase, changes the substrate specificity of galactosyltransferase in the mammary gland making glucose a good acceptor substrate for this enzyme. This enables LS to synthesize lactose, the major carbohydrate component of milk. In other tissues, galactosyltransferase transfers galactose onto the N-acetylglucosamine of the oligosaccharide chains in glycoproteins. This is Alpha-lactalbumin (LALBA) from Homo sapiens (Human).